The chain runs to 715 residues: Transcription factor MST12 (715 aa).

A compositionally biased stretch (low complexity) spans 214 to 224; it reads SSSFNAQQVSF. Disordered stretches follow at residues 214–243, 439–469, and 518–539; these read SSSF…MPPP, AAHR…NSPP, and PMPS…AQGG. 2 C2H2-type zinc fingers span residues 564 to 588 and 594 to 616; these read HSCP…VRTH and YICP…KRTH. The tract at residues 632-691 is disordered; the sequence is EEEYSGDDHLGSLEEASPTSEGGYVTSSLNSAMAHSNTSQHPGSNAVSPNPGPMSHAPTY. The segment covering 648–679 has biased composition (polar residues); it reads SPTSEGGYVTSSLNSAMAHSNTSQHPGSNAVS.

It belongs to the STE12 transcription factor family.

The protein resides in the nucleus. Functionally, transcription factor that may function downstream of PMK1 to regulate genes involved in infectious hyphae growth. Is not essential for vegetative growth, conidiation or appressorium formation. May be involved in the regulation of the expression of the cell surface sensor MSB2. The protein is Transcription factor MST12 of Pyricularia oryzae (strain 70-15 / ATCC MYA-4617 / FGSC 8958) (Rice blast fungus).